The following is a 466-amino-acid chain: SVGFKAGVKDYKLTYYTPEYETLDTDILAAFRVSPQPGVPPEEAGAAVAAESSTGTWTTVWTDGLTSLDRYKGRCYHIEPVAGEENQYICYVAYPLDLFEEGSVTNMFTSIVGNVFGFKALRALRLEDLRIPVAYVKTFLGPPHGIQVERDKLNKYGRPLLGCTIKPKLGLSAKNYGRAVYECLRGGLDFTKDDENVNSQPFMRWRDRFLFCAEAIYKSQAETGEIKGHYLNATAGTCEEMIKRAVFARELGVPIVMHDYLTGGFTANTSLAHYCRDNGLLLHIHRAMHAVIDRQKNHGMHFRVLAKALRLSGGDHIHAGTVVGKLEGEREITLGFVDLLRDDFTEKDRSRGIYFTQSWVSTPGVLPVASGGIHVWHMPALTEIFGDDSVLQFGGGTLGHPWGNAPGAVANRVALEACVQARNEGRDLAREGNTIIREACKWSPELAAACEVWKEIKFEFQAMDTI.

Lysine 5 is modified (N6,N6,N6-trimethyllysine). Substrate-binding residues include asparagine 114 and threonine 164. Lysine 166 serves as the catalytic Proton acceptor. A substrate-binding site is contributed by lysine 168. Positions 192, 194, and 195 each coordinate Mg(2+). An N6-carboxylysine modification is found at lysine 192. Catalysis depends on histidine 285, which acts as the Proton acceptor. 3 residues coordinate substrate: arginine 286, histidine 318, and serine 370.

It belongs to the RuBisCO large chain family. Type I subfamily. In terms of assembly, heterohexadecamer of 8 large chains and 8 small chains; disulfide-linked. The disulfide link is formed within the large subunit homodimers. Mg(2+) serves as cofactor. In terms of processing, the disulfide bond which can form in the large chain dimeric partners within the hexadecamer appears to be associated with oxidative stress and protein turnover.

It is found in the plastid. It localises to the chloroplast. It carries out the reaction 2 (2R)-3-phosphoglycerate + 2 H(+) = D-ribulose 1,5-bisphosphate + CO2 + H2O. It catalyses the reaction D-ribulose 1,5-bisphosphate + O2 = 2-phosphoglycolate + (2R)-3-phosphoglycerate + 2 H(+). In terms of biological role, ruBisCO catalyzes two reactions: the carboxylation of D-ribulose 1,5-bisphosphate, the primary event in carbon dioxide fixation, as well as the oxidative fragmentation of the pentose substrate in the photorespiration process. Both reactions occur simultaneously and in competition at the same active site. The chain is Ribulose bisphosphate carboxylase large chain from Silene gallica (Common catchfly).